A 115-amino-acid polypeptide reads, in one-letter code: Cell division topological specificity factor (115 aa).

Residues 93-115 (QLKEPKNQSELDSPETEGTDQKS) form a disordered region. Residues 104-115 (DSPETEGTDQKS) are compositionally biased toward acidic residues.

It belongs to the MinE family.

Functionally, prevents the cell division inhibition by proteins MinC and MinD at internal division sites while permitting inhibition at polar sites. This ensures cell division at the proper site by restricting the formation of a division septum at the midpoint of the long axis of the cell. This chain is Cell division topological specificity factor, found in Prochlorococcus marinus (strain NATL1A).